The sequence spans 245 residues: Uridylate kinase (245 aa).

12-15 lines the ATP pocket; it reads KLSG. Residues 20–25 form an involved in allosteric activation by GTP region; sequence GEKGVG. Residue Gly-54 coordinates UMP. Positions 55 and 59 each coordinate ATP. UMP contacts are provided by residues Asp-74 and 135 to 142; that span reads VGSPYFST. The ATP site is built by Asn-163, Tyr-169, and Asp-172.

It belongs to the UMP kinase family. In terms of assembly, homohexamer.

The protein resides in the cytoplasm. It catalyses the reaction UMP + ATP = UDP + ADP. Its pathway is pyrimidine metabolism; CTP biosynthesis via de novo pathway; UDP from UMP (UMPK route): step 1/1. Its activity is regulated as follows. Allosterically activated by GTP. Inhibited by UTP. Catalyzes the reversible phosphorylation of UMP to UDP. This Streptococcus mutans serotype c (strain ATCC 700610 / UA159) protein is Uridylate kinase.